A 36-amino-acid chain; its full sequence is U14-ctenitoxin-Co1b (36 aa).

As to expression, expressed by the venom gland.

The protein localises to the secreted. Functionally, not toxic to mice by intracerebroventricular injection. This chain is U14-ctenitoxin-Co1b, found in Ctenus ornatus (Brazilian spider).